Here is a 1050-residue protein sequence, read N- to C-terminus: TSC22 domain family protein 1 (1050 aa).

Residues 1–99 (MHQPPESTAA…SQAQLQGQPL (99 aa)) are required for interaction with TGFBR1 and promotion of TGF-beta signaling. Disordered stretches follow at residues 22–111 (MAHP…KKSG), 126–285 (ISSN…VSSA), 445–479 (QTPT…SVGS), 511–531 (DFSS…VQLQ), 581–609 (LAQP…QLQY), 720–740 (VQPP…PPSS), 795–847 (QLPT…GSLV), and 879–919 (SLAQ…VSDG). Over residues 38 to 55 (ASALSAAGTGVSGAAPSS) the composition is skewed to low complexity. Pro residues predominate over residues 58–71 (FPPPSSLLQPPPPA). The span at 85-97 (SLNLLSQAQLQGQ) shows a compositional bias: low complexity. Residues 134 to 143 (EDTESYDDLD) are compositionally biased toward acidic residues. Basic residues predominate over residues 217 to 241 (HPHHLHHHHHIHHGHHLHHGHHHSS). Ser-265 bears the Phosphoserine mark. Residues 458–476 (TSGSSVSSSVSTLSHYTES) show a composition bias toward low complexity. Residues 586–603 (LPYPQPAPPVQTPLPGAP) are compositionally biased toward pro residues. Over residues 906–919 (LSGDSGGVSAVSDG) the composition is skewed to low complexity. The leucine-zipper stretch occupies residues 983–1004 (LKEQIKELIEKNSQLEQENNLL). The segment at 1015–1050 (QFQAQLQTGSPPATTQPQGTTQPPAQPASQGSGSTA) is disordered. Positions 1021 to 1050 (QTGSPPATTQPQGTTQPPAQPASQGSGSTA) are enriched in low complexity.

It belongs to the TSC-22/Dip/Bun family. As to quaternary structure, forms homodimers. Forms heterodimers. Component of a complex composed of TSC22D1 (via N-terminus), TGFBR1 and TGFBR2; the interaction between TSC22D1 and TGFBR1 is inhibited by SMAD7 and promoted by TGFB1. Interacts with SMAD7; the interaction requires TGF-beta and the interaction is inhibited by TGFBR1. Interacts with TPT1/fortilin; interaction results in the destabilization of TSC22D1 protein and prevents TSC22D1-mediated apoptosis. Interacts with SMAD4 (via N-terminus). Interacts with ACVRL1/ALK1, ACVR1/ALK2, BMPR1A/ALK3, ACVR1B/ALK4, BMPR1B/ALK6, ACVR2A/ACTRII, and BMPR2. Interacts with SMAD6. Interacts with TFE3; the interaction is enhanced in the presence of TGF-beta. In terms of assembly, forms a heterodimer with TSC22D4/THG1. Forms a heterodimer with TSC22D4/THG1. Interacts with histone H1-2. Interacts with GNL3. In terms of tissue distribution, ubiquitously expressed, abundantly expressed in testis, ovary, uterus, and lung. Expressed in cardiomyocytes.

Its subcellular location is the cytoplasm. The protein resides in the nucleus. It is found in the cell membrane. It localises to the mitochondrion. In terms of biological role, transcriptional repressor. Acts on the C-type natriuretic peptide (CNP) promoter. Acts to promote CASP3-mediated apoptosis. Positively regulates TGF-beta signaling by interacting with SMAD7 which inhibits binding of SMAD7 to TGFBR1, preventing recruitment of SMURF ubiquitin ligases to TGFBR1 and inhibiting SMURF-mediated ubiquitination and degradation of TGFBR1. Contributes to enhancement of TGF-beta signaling by binding to and modulating the transcription activator activity of SMAD4. Promotes TGF-beta-induced transcription of COL1A2; via its interaction with TFE3 at E-boxes in the gene proximal promoter. Plays a role in the repression of hematopoietic precursor cell growth. Promotes IL2 deprivation-induced apoptosis in T-lymphocytes, via repression of TSC22D3/GILZ transcription and activation of the caspase cascade. Its function is as follows. May act to negatively regulate TGFB3 signaling and thereby inhibit cell death in mammary gland cells. Functionally, positively regulates cell death in response to TGFB3 during mammary gland involution. In Rattus norvegicus (Rat), this protein is TSC22 domain family protein 1.